Reading from the N-terminus, the 88-residue chain is Acylphosphatase (88 aa).

Positions alanine 3–glycine 88 constitute an Acylphosphatase-like domain. Catalysis depends on residues arginine 18 and asparagine 36.

This sequence belongs to the acylphosphatase family.

It carries out the reaction an acyl phosphate + H2O = a carboxylate + phosphate + H(+). This is Acylphosphatase (acyP) from Xanthomonas campestris pv. campestris (strain 8004).